Here is a 315-residue protein sequence, read N- to C-terminus: Olfactory receptor 51L1 (315 aa).

Topologically, residues 1–27 (MGDWNNSDAVEPIFILRGFPGLEYVHS) are extracellular. N5 is a glycosylation site (N-linked (GlcNAc...) asparagine). A helical membrane pass occupies residues 28–48 (WLSILFCLAYLVAFMGNVTIL). At 49 to 56 (SVIWIESS) the chain is on the cytoplasmic side. The helical transmembrane segment at 57 to 77 (LHQPMYYFISILAVNDLGMSL) threads the bilayer. Residues 78–101 (STLPTMLAVLWLDAPEIQASACYA) are Extracellular-facing. The cysteines at positions 99 and 191 are disulfide-linked. A helical transmembrane segment spans residues 102–122 (QLFFIHTFTFLESSVLLAMAF). The Cytoplasmic segment spans residues 123–141 (DRFVAICHPLHYPTILTNS). Residues 142–162 (VIGKIGLACLLRSLGVVLPTP) traverse the membrane as a helical segment. Topologically, residues 163-198 (LLLRHYHYCHGNALSHAFCLHQDVLRLSCTDARTNS) are extracellular. A helical transmembrane segment spans residues 199-219 (IYGLCVVIATLGVDSIFILLS). Over 220–239 (YVLILNTVLDIASREEQLKA) the chain is Cytoplasmic. A helical membrane pass occupies residues 240-260 (LNTCVSHICVVLIFFVPVIGV). Over 261–275 (SMVHRFGKHLSPIVH) the chain is Extracellular. A helical membrane pass occupies residues 276-296 (ILMADIYLLLPPVLNPIVYSV). Residues 297–315 (RTKQIRLGILHKFVLRRRF) lie on the Cytoplasmic side of the membrane.

This sequence belongs to the G-protein coupled receptor 1 family.

The protein resides in the cell membrane. Odorant receptor. In Homo sapiens (Human), this protein is Olfactory receptor 51L1 (OR51L1).